The chain runs to 160 residues: D-aminoacyl-tRNA deacylase 2 (160 aa).

Residues 152-153 carry the Gly-transPro motif, allows the protein to recognize chirality of D-amino acids motif; that stretch reads GP.

This sequence belongs to the DTD family. Homodimer.

The protein resides in the cytoplasm. The catalysed reaction is a D-aminoacyl-tRNA + H2O = a tRNA + a D-alpha-amino acid + H(+). It carries out the reaction glycyl-tRNA(Ala) + H2O = tRNA(Ala) + glycine + H(+). The enzyme catalyses D-tyrosyl-tRNA(Tyr) + H2O = D-tyrosine + tRNA(Tyr). It catalyses the reaction L-alanyl-tRNA(Thr) + H2O = tRNA(Thr) + L-alanine + H(+). Its function is as follows. Deacylates mischarged D-aminoacyl-tRNAs. Also deacylates mischarged glycyl-tRNA(Ala), protecting cells against glycine mischarging by AlaRS. Probably acts by rejecting L-amino acids from its binding site rather than specific recognition of D-amino acids. Catalyzes the hydrolysis of D-tyrosyl-tRNA(Tyr), has no activity on correctly charged L-tyrosyl-tRNA(Tyr). By recycling D-aminoacyl-tRNA to D-amino acids and free tRNA molecules, this enzyme counteracts the toxicity associated with the formation of D-aminoacyl-tRNA entities in vivo and helps enforce protein L-homochirality. In contrast to DTD1, deacylates L-Ala mischarged on tRNA(Thr)(G4.U69) by alanine-tRNA ligase AARS. Can deacylate L-Ala due to a relaxed specificity for substrate chirality caused by the trans conformation of the Gly-Pro motif in the active site. Also hydrolyzes correctly charged, achiral, glycyl-tRNA(Gly) in vitro, although in vivo eef1a1a/EF-Tu may protect cognate achiral glycyl-tRNA(Gly) from DTD2-mediated deacetylation. This chain is D-aminoacyl-tRNA deacylase 2 (dtd2), found in Danio rerio (Zebrafish).